The sequence spans 393 residues: 4-hydroxyphenylpyruvate dioxygenase (393 aa).

Residue Thr2 is modified to N-acetylthreonine. VOC domains follow at residues His18–Lys149 and Ile180–Lys338. Lys132 is subject to N6-succinyllysine. His183 contacts Fe cation. Residues Ser211, Ser226, and Ser250 each carry the phosphoserine modification. Fe cation contacts are provided by His266 and Glu349.

The protein belongs to the 4HPPD family. Homodimer. The cofactor is Fe cation.

The protein resides in the cytoplasm. It is found in the endoplasmic reticulum membrane. The protein localises to the golgi apparatus membrane. It catalyses the reaction 3-(4-hydroxyphenyl)pyruvate + O2 = homogentisate + CO2. The protein operates within amino-acid degradation; L-phenylalanine degradation; acetoacetate and fumarate from L-phenylalanine: step 3/6. Its function is as follows. Catalyzes the conversion of 4-hydroxyphenylpyruvic acid to homogentisic acid, one of the steps in tyrosine catabolism. In Rattus norvegicus (Rat), this protein is 4-hydroxyphenylpyruvate dioxygenase (Hpd).